We begin with the raw amino-acid sequence, 858 residues long: MAELSEEALLSVLPTIRVPKAGDRVHKDECAFSFDTPESEGGLYICMNTFLGFGKQYVERHFNKTGPRVYLHLRRTRRPKEEDPTTGTGDPPRKKPTRLAIGVEGGFDLSEEKFELDEDVKIVILPDYLEIARDGLGGLPDIVRDRVTSAVEALLSADSASRKQEVQAWDGEVRQVSKHAFSLKQLDNPARIPPCGWECSKCDMRENLWLNLTDGSILCGRRYFDGSGGNNHAVEHYRETGYPLAVKLGTITPDGADVYSYDEDDMVLDPSLAEHLSHFGIDMLKMQKTDKTMTELEIDMNQRIGEWELIQESGVPLKPLFGPGYTGIRNLGNSCYLNSVVLVLFSIPDFQRKYVDKLEKIFQNAPTDPTQDFSTQVAKLGHGLLSGEYSKPVPESGDGERVPEQKEVQDGIAPRMFKALIGKGHPEFSTNRQQDAQEFFLHLINMVERNCRSSENPNEVFRFLVEEKIKCLATEKVKYTQRVDYIMQLPVPMDAALNKEELLEYEEKKRQAEEEKMALPELVRAQVPFSSCLEAYGAPEQVDDFWSTALQAKSVAVKTTRFASFPDYLVIQIKKFTFGLDWVPKKLDVSIEMPEELDISQLRGTGLQPGEEELPDIAPPLVTPDEPKGSLGFYGNEDEDSFCSPHFSSPTSPMLDESVIIQLVEMGFPMDACRKAVYYTGNSGAEAAMNWVMSHMDDPDFANPLILPGSSGPGSTSAAADPPPEDCVTTIVSMGFSRDQALKALRATNNSLERAVDWIFSHIDDLDAEAAMDISEGRSAADSISESVPVGPKVRDGPGKYQLFAFISHMGTSTMCGHYVCHIKKEGRWVIYNDQKVCASEKPPKDLGYIYFYQRVAS.

An N-acetylalanine modification is found at A2. Residues 74–96 are disordered; that stretch reads RRTRRPKEEDPTTGTGDPPRKKP. K113 is covalently cross-linked (Glycyl lysine isopeptide (Lys-Gly) (interchain with G-Cter in SUMO)). A phosphoserine mark is found at S149 and S156. The UBP-type; degenerate zinc-finger motif lies at 175 to 283; that stretch reads QVSKHAFSLK…EHLSHFGIDM (109 aa). A disulfide bridge links C195 with C816. The Zn(2+) site is built by C199 and C202. W209 provides a ligand contact to substrate. C219 contacts Zn(2+). 221 to 224 is a binding site for substrate; it reads RRYF. Position 232 (H232) interacts with Zn(2+). Y259, Y261, and D264 together coordinate substrate. Residue T292 is modified to Phosphothreonine. One can recognise a USP domain in the interval 326-856; the sequence is TGIRNLGNSC…LGYIYFYQRV (531 aa). C335 acts as the Nucleophile in catalysis. Residue T623 is modified to Phosphothreonine. UBA domains follow at residues 654–695 and 722–762; these read MLDE…VMSH and PPPE…IFSH. A phosphoserine mark is found at S779, S783, and S785. Catalysis depends on H818, which acts as the Proton acceptor.

The protein belongs to the peptidase C19 family. Homodimer. Interacts with TRIML1. Post-translationally, ubiquitinated by SMURF1; leading to proteasomal degradation. SUMOylated at Lys-113; SUMOylation affects the interaction with Cav3.2 channels.

The protein resides in the cytoplasm. It localises to the stress granule. The protein localises to the nucleus. It carries out the reaction Thiol-dependent hydrolysis of ester, thioester, amide, peptide and isopeptide bonds formed by the C-terminal Gly of ubiquitin (a 76-residue protein attached to proteins as an intracellular targeting signal).. Its function is as follows. Deubiquitinating enzyme that participates in a wide range of cellular processes by specifically cleaving isopeptide bonds between ubiquitin and substrate proteins or ubiquitin itself. Affects thereby important cellular signaling pathways such as NF-kappa-B, Wnt/beta-catenin, and cytokine production by regulating ubiquitin-dependent protein degradation. Participates in the activation of the Wnt signaling pathway by promoting FOXM1 deubiquitination and stabilization that induces the recruitment of beta-catenin to Wnt target gene promoter. Regulates the assembly and disassembly of heat-induced stress granules by mediating the hydrolysis of unanchored ubiquitin chains. Promotes lipopolysaccharide-induced apoptosis and inflammatory response by stabilizing the TXNIP protein. Affects T-cell biology by stabilizing the inhibitory receptor on T-cells PDC1. Acts as a negative regulator of autophagy by regulating ULK1 at both protein and mRNA levels. Acts also as a negative regulator of type I interferon production by simultaneously removing both 'Lys-48'-linked unanchored and 'Lys-63'-linked anchored polyubiquitin chains on the transcription factor IRF3. Modulates the stability of DNA mismatch repair protein MLH1 and counteracts the effect of the ubiquitin ligase UBR4. Upon activation by insulin, it gets phosphorylated through mTORC1-mediated phosphorylation to enhance YTHDF1 stability by removing 'Lys-11'-linked polyubiquitination. May also deubiquitinate other substrates such as the calcium channel CACNA1H. In Pongo abelii (Sumatran orangutan), this protein is Ubiquitin carboxyl-terminal hydrolase 5 (UBP5).